A 78-amino-acid chain; its full sequence is Acyl carrier protein (78 aa).

The Carrier domain occupies 1–77; sequence MALIDEIKDV…DAAKYIEEHK (77 aa). Serine 37 carries the post-translational modification O-(pantetheine 4'-phosphoryl)serine.

Belongs to the acyl carrier protein (ACP) family. In terms of processing, 4'-phosphopantetheine is transferred from CoA to a specific serine of apo-ACP by AcpS. This modification is essential for activity because fatty acids are bound in thioester linkage to the sulfhydryl of the prosthetic group.

The protein localises to the secreted. The protein operates within lipid metabolism; fatty acid biosynthesis. Functionally, carrier of the growing fatty acid chain in fatty acid biosynthesis. Has hemolytic activity forming pores approximately 1 nm in diameter into erythrocytes. Is able to induce murine colonic lesions and to disrupt the integrity of epithelial cell monolayers. This chain is Acyl carrier protein (acpP), found in Brachyspira hyodysenteriae (Treponema hyodysenteriae).